The chain runs to 503 residues: Variant surface glycoprotein AnTaT 1.1 (503 aa).

An N-terminal signal peptide occupies residues 1 to 29 (MVTKERNAALKIVMLVASALTLHPQQALA). 2 disulfide bridges follow: cysteine 45–cysteine 172 and cysteine 154–cysteine 209. An N-linked (GlcNAc...) asparagine glycan is attached at asparagine 113. 2 N-linked (GlcNAc...) asparagine glycosylation sites follow: asparagine 419 and asparagine 432. Aspartate 480 carries the GPI-anchor amidated aspartate lipid modification. Positions 481–503 (SSILLTKNFALSVVSAALVALLF) are cleaved as a propeptide — removed in mature form.

It localises to the cell membrane. In terms of biological role, VSG forms a coat on the surface of the parasite. The trypanosome evades the immune response of the host by expressing a series of antigenically distinct VSGs from an estimated 1000 VSG genes. The sequence is that of Variant surface glycoprotein AnTaT 1.1 from Trypanosoma brucei brucei.